A 300-amino-acid polypeptide reads, in one-letter code: Ornithine carbamoyltransferase (300 aa).

Residues Ser-51–Thr-54, Gln-78, Arg-102, and His-129–Gln-132 each bind carbamoyl phosphate. L-ornithine-binding positions include Asn-160, Asp-217, and Ser-221–Met-222. Carbamoyl phosphate contacts are provided by residues Cys-257–Leu-258 and Arg-285.

It belongs to the aspartate/ornithine carbamoyltransferase superfamily. OTCase family.

It localises to the cytoplasm. It catalyses the reaction carbamoyl phosphate + L-ornithine = L-citrulline + phosphate + H(+). It participates in amino-acid biosynthesis; L-arginine biosynthesis; L-arginine from L-ornithine and carbamoyl phosphate: step 1/3. In terms of biological role, reversibly catalyzes the transfer of the carbamoyl group from carbamoyl phosphate (CP) to the N(epsilon) atom of ornithine (ORN) to produce L-citrulline. This chain is Ornithine carbamoyltransferase, found in Halorhodospira halophila (strain DSM 244 / SL1) (Ectothiorhodospira halophila (strain DSM 244 / SL1)).